Here is a 423-residue protein sequence, read N- to C-terminus: Probable histone-binding protein rbbD (423 aa).

6 WD repeats span residues 119-159 (NHEG…LEPT), 172-212 (GHKK…KSDS), 222-262 (GHTS…KPIH), 266-306 (AHNS…NRLH), 310-350 (SHTD…EEQN), and 367-407 (GHTS…YNDR).

This sequence belongs to the WD repeat RBAP46/RBAP48/MSI1 family. In terms of assembly, probably binds directly to helix 1 of the histone fold of histone H4, a region that is not accessible when H4 is in chromatin.

It localises to the nucleus. Core histone-binding subunit that may target chromatin assembly factors, chromatin remodeling factors and histone deacetylases to their histone substrates in a manner that is regulated by nucleosomal DNA. Component of several complexes which regulate chromatin metabolism. In Dictyostelium discoideum (Social amoeba), this protein is Probable histone-binding protein rbbD (rbbD).